Here is a 923-residue protein sequence, read N- to C-terminus: Transportin-3 (923 aa).

N-acetylmethionine is present on methionine 1. The residue at position 74 (serine 74) is a Phosphoserine. Threonine 896 carries the phosphothreonine modification.

As to quaternary structure, interacts with (GTP-bound) Ran. Interacts with (phosphorylated) SFRS1 and SFRS2; leading to their nuclear import. Interacts with NUP62. Interacts with RBM4. Interacts with CPSF6, promoting its nuclear import. (Microbial infection) Interacts with the HIV-1 pre-integration complex (PIC), which is composed of viral genome, matrix protein, Vpr and integrase. Interacts with HIV-1 integrase protein; the interaction is direct. As to expression, expressed in skeletal muscle.

The protein resides in the nucleus envelope. Its subcellular location is the cytoplasm. In terms of biological role, importin, which transports target proteins into the nucleus. Specifically mediates the nuclear import of splicing factor serine/arginine (SR) proteins, such as RBM4, SFRS1 and SFRS2, by recognizing phosphorylated SR domains. Also mediates the nuclear import of serine/arginine (SR) protein CPSF6, independently of CPSF6 phosphorylation. The nuclear import process is regulated by the small GTPase Ran that partitions between cytoplasm and nucleus in the predominantly GDP- and GTP-bound form, respectively. Importin associates with target cargo proteins in the cytoplasm, and the competitive binding of GTP-bound Ran induces the release of cargos in the nucleus. Functionally, (Microbial infection) Involved in immunodeficiency virus (HIV-1) infection by importing the pre-integration complex (PIC) into the nucleus. Required for a nuclear maturation step of HIV-1 prior to integration. In Homo sapiens (Human), this protein is Transportin-3.